Here is a 375-residue protein sequence, read N- to C-terminus: 23S rRNA (uracil(747)-C(5))-methyltransferase RlmC (375 aa).

Residues C3, C11, C14, and C87 each contribute to the [4Fe-4S] cluster site. S-adenosyl-L-methionine-binding residues include Q212, F241, E262, and N307. C334 acts as the Nucleophile in catalysis.

Belongs to the class I-like SAM-binding methyltransferase superfamily. RNA M5U methyltransferase family. RlmC subfamily.

The enzyme catalyses uridine(747) in 23S rRNA + S-adenosyl-L-methionine = 5-methyluridine(747) in 23S rRNA + S-adenosyl-L-homocysteine + H(+). Functionally, catalyzes the formation of 5-methyl-uridine at position 747 (m5U747) in 23S rRNA. In Salmonella agona (strain SL483), this protein is 23S rRNA (uracil(747)-C(5))-methyltransferase RlmC.